The following is a 122-amino-acid chain: uncharacterized protein (122 aa).

The signal sequence occupies residues 1–33 (MASTVAGLSMSAESLRLPLLIGVSSGMLSVSDA).

This is an uncharacterized protein from Saccharomyces cerevisiae (strain ATCC 204508 / S288c) (Baker's yeast).